We begin with the raw amino-acid sequence, 356 residues long: Histidinol-phosphate aminotransferase (356 aa).

At Lys214 the chain carries N6-(pyridoxal phosphate)lysine.

Belongs to the class-II pyridoxal-phosphate-dependent aminotransferase family. Histidinol-phosphate aminotransferase subfamily. As to quaternary structure, homodimer. The cofactor is pyridoxal 5'-phosphate.

It catalyses the reaction L-histidinol phosphate + 2-oxoglutarate = 3-(imidazol-4-yl)-2-oxopropyl phosphate + L-glutamate. It functions in the pathway amino-acid biosynthesis; L-histidine biosynthesis; L-histidine from 5-phospho-alpha-D-ribose 1-diphosphate: step 7/9. In Shigella flexneri serotype 5b (strain 8401), this protein is Histidinol-phosphate aminotransferase.